Consider the following 580-residue polypeptide: N(6)-adenosine-methyltransferase catalytic subunit METTL3 (580 aa).

The segment at 1–70 (MSDTWSSIQA…PKPSTTSVAP (70 aa)) is disordered. Ser-2 is modified (N-acetylserine; alternate). A Phosphoserine; alternate modification is found at Ser-2. The segment covering 28-37 (QDSGHLDLRN) has biased composition (basic and acidic residues). Ser-43, Ser-48, and Ser-50 each carry phosphoserine. Low complexity predominate over residues 55-67 (APTSSGPKPSTTS). Glycyl lysine isopeptide (Lys-Gly) (interchain with G-Cter in SUMO1) cross-links involve residues Lys-177, Lys-211, Lys-212, and Lys-215. A disordered region spans residues 198–217 (LASSASEPAKEPAKKSRKHA). The Nuclear localization signal signature appears at 210–215 (AKKSRK). Phosphoserine occurs at positions 219, 243, and 350. Residues 377-378 (DI) and Asp-395 contribute to the S-adenosyl-L-methionine site. The tract at residues 396 to 410 (PPWDIHMELPYGTLT) is gate loop 1. 2 interaction with METTL14 regions span residues 450 to 454 (ERVDE) and 464 to 480 (QRII…NHGK). Residues 462–479 (QLQRIIRTGRTGHWLNHG) are interphase loop. The segment at 465–478 (RIIRTGRTGHWLNH) is positively charged region required for RNA-binding. The segment at 507-515 (VRSTSHKPD) is gate loop 2. Residues Lys-513, 536–539 (RPHN), and 549–550 (NQ) each bind S-adenosyl-L-methionine.

Belongs to the MT-A70-like family. Heterodimer; heterodimerizes with METTL14 to form an antiparallel heterodimer that constitutes an active methyltransferase. Component of the WMM complex, a N6-methyltransferase complex composed of a catalytic subcomplex, named MAC, and of an associated subcomplex, named MACOM. The MAC subcomplex is composed of METTL3 and METTL14. The MACOM subcomplex is composed of WTAP, ZC3H13, CBLL1/HAKAI, VIRMA, and, in some cases of RBM15 (RBM15 or RBM15B). Interacts with NCBP1/CBP80. Interacts with EIF4E. Interacts with EIF3B. In terms of processing, sumoylation inhibits the N6-adenosine-methyltransferase activity. Sumoylation does not affect subcellular location or interaction with METTL14. Desumoylated by SENP1. As to expression, present in both germ cells and somatic cells during testis development (at protein level).

It is found in the nucleus. The protein resides in the nucleus speckle. It localises to the cytoplasm. It carries out the reaction an adenosine in mRNA + S-adenosyl-L-methionine = an N(6)-methyladenosine in mRNA + S-adenosyl-L-homocysteine + H(+). Its activity is regulated as follows. Methyltransferase activity is regulated by miRNAs via a sequence pairing mechanism. Methyltransferase activity is inhibited by sumoylation. The METTL3-METTL14 heterodimer forms a N6-methyltransferase complex that methylates adenosine residues at the N(6) position of some RNAs and regulates various processes such as the circadian clock, differentiation of embryonic and hematopoietic stem cells, cortical neurogenesis, response to DNA damage, differentiation of T-cells and primary miRNA processing. In the heterodimer formed with METTL14, METTL3 constitutes the catalytic core. N6-methyladenosine (m6A), which takes place at the 5'-[AG]GAC-3' consensus sites of some mRNAs, plays a role in mRNA stability, processing, translation efficiency and editing. M6A acts as a key regulator of mRNA stability: methylation is completed upon the release of mRNA into the nucleoplasm and promotes mRNA destabilization and degradation. In embryonic stem cells (ESCs), m6A methylation of mRNAs encoding key naive pluripotency-promoting transcripts results in transcript destabilization, promoting differentiation of ESCs. M6A regulates the length of the circadian clock: acts as an early pace-setter in the circadian loop by putting mRNA production on a fast-track for facilitating nuclear processing, thereby providing an early point of control in setting the dynamics of the feedback loop. M6A also regulates circadian regulation of hepatic lipid metabolism. M6A regulates spermatogonial differentiation and meiosis and is essential for male fertility and spermatogenesis. Also required for oogenesis. Involved in the response to DNA damage: in response to ultraviolet irradiation, METTL3 rapidly catalyzes the formation of m6A on poly(A) transcripts at DNA damage sites, leading to the recruitment of POLK to DNA damage sites. M6A is also required for T-cell homeostasis and differentiation: m6A methylation of transcripts of SOCS family members (SOCS1, SOCS3 and CISH) in naive T-cells promotes mRNA destabilization and degradation, promoting T-cell differentiation. Inhibits the type I interferon response by mediating m6A methylation of IFNB. M6A also regulates cortical neurogenesis: m6A methylation of transcripts related to transcription factors, neural stem cells, the cell cycle and neuronal differentiation during brain development promotes their destabilization and decay, promoting differentiation of radial glial cells. M6A also takes place in other RNA molecules, such as primary miRNA (pri-miRNAs). Mediates m6A methylation of Xist RNA, thereby participating in random X inactivation: m6A methylation of Xist leads to target YTHDC1 reader on Xist and promote transcription repression activity of Xist. METTL3 mediates methylation of pri-miRNAs, marking them for recognition and processing by DGCR8. Acts as a positive regulator of mRNA translation independently of the methyltransferase activity: promotes translation by interacting with the translation initiation machinery in the cytoplasm. This is N(6)-adenosine-methyltransferase catalytic subunit METTL3 from Mus musculus (Mouse).